Reading from the N-terminus, the 205-residue chain is Holliday junction branch migration complex subunit RuvA (205 aa).

Positions 1 to 64 (MIGKLKGVID…EDQIKLFGFR (64 aa)) are domain I. The interval 65–143 (SDIEREWFRL…AFANVDPAVV (79 aa)) is domain II. Residues 144-154 (HLAGAVDDDRA) form a flexible linker region. The domain III stretch occupies residues 154 to 205 (APRPVKDAISALVNLGYGQPQAAAAIASVARDAGEGAETAQLIRLGLKELAK).

It belongs to the RuvA family. In terms of assembly, homotetramer. Forms an RuvA(8)-RuvB(12)-Holliday junction (HJ) complex. HJ DNA is sandwiched between 2 RuvA tetramers; dsDNA enters through RuvA and exits via RuvB. An RuvB hexamer assembles on each DNA strand where it exits the tetramer. Each RuvB hexamer is contacted by two RuvA subunits (via domain III) on 2 adjacent RuvB subunits; this complex drives branch migration. In the full resolvosome a probable DNA-RuvA(4)-RuvB(12)-RuvC(2) complex forms which resolves the HJ.

It is found in the cytoplasm. Functionally, the RuvA-RuvB-RuvC complex processes Holliday junction (HJ) DNA during genetic recombination and DNA repair, while the RuvA-RuvB complex plays an important role in the rescue of blocked DNA replication forks via replication fork reversal (RFR). RuvA specifically binds to HJ cruciform DNA, conferring on it an open structure. The RuvB hexamer acts as an ATP-dependent pump, pulling dsDNA into and through the RuvAB complex. HJ branch migration allows RuvC to scan DNA until it finds its consensus sequence, where it cleaves and resolves the cruciform DNA. The protein is Holliday junction branch migration complex subunit RuvA of Afipia carboxidovorans (strain ATCC 49405 / DSM 1227 / KCTC 32145 / OM5) (Oligotropha carboxidovorans).